The chain runs to 201 residues: Protamine-like protein 99C (201 aa).

The interval 93-143 is disordered; that stretch reads GGQQSSCQRQSPSARLRESERRSSRSKTLCRSAKNRQRGKPKPQQSKRRLS. Over residues 94–104 the composition is skewed to polar residues; sequence GQQSSCQRQSP. The span at 125 to 143 shows a compositional bias: basic residues; that stretch reads AKNRQRGKPKPQQSKRRLS.

This sequence belongs to the UPF0771 family.

The protein resides in the nucleus. Its subcellular location is the chromosome. Functionally, regulates chromatin compaction in spermatid nuclei and is essential for male fertility. Functions in parallel with other chromatin-condensing proteins such as ProtA, ProtB and Mst77F. This Drosophila melanogaster (Fruit fly) protein is Protamine-like protein 99C.